Reading from the N-terminus, the 316-residue chain is Adenine deaminase (316 aa).

Residues His14, His16, and His194 each contribute to the Zn(2+) site. Residue Glu197 is the Proton donor of the active site. Position 275 (Asp275) interacts with Zn(2+). Asp276 is a substrate binding site.

Belongs to the metallo-dependent hydrolases superfamily. Adenosine and AMP deaminases family. Adenine deaminase type 2 subfamily. Zn(2+) serves as cofactor.

The catalysed reaction is adenine + H2O + H(+) = hypoxanthine + NH4(+). Catalyzes the hydrolytic deamination of adenine to hypoxanthine. Plays an important role in the purine salvage pathway and in nitrogen catabolism. The polypeptide is Adenine deaminase (Pseudomonas paraeruginosa (strain DSM 24068 / PA7) (Pseudomonas aeruginosa (strain PA7))).